The chain runs to 521 residues: Fucosyltransferase 3 (521 aa).

Basic and acidic residues predominate over residues 1–12 (MKRGKKNSDAGD). Residues 1-29 (MKRGKKNSDAGDRLTNSDTRTGSSELNAM) are disordered. At 1–39 (MKRGKKNSDAGDRLTNSDTRTGSSELNAMMKPSLSSMKT) the chain is on the cytoplasmic side. Positions 14–26 (LTNSDTRTGSSEL) are enriched in polar residues. The chain crosses the membrane as a helical; Signal-anchor for type II membrane protein span at residues 40 to 60 (MGLLLAVLMVASVMFSLSVVL). The Lumenal segment spans residues 61-521 (RDPPSDDVIE…QATLFHGCKD (461 aa)). N152, N222, and N493 each carry an N-linked (GlcNAc...) asparagine glycan.

The protein belongs to the glycosyltransferase 37 family. As to expression, expressed in roots, stems, leaves, flowers, siliques and seedlings.

It is found in the golgi apparatus. It localises to the golgi stack membrane. It functions in the pathway protein modification; protein glycosylation. Its function is as follows. May be involved in cell wall biosynthesis. May act as a fucosyltransferase. The protein is Fucosyltransferase 3 (FUT3) of Arabidopsis thaliana (Mouse-ear cress).